Here is a 417-residue protein sequence, read N- to C-terminus: Gamma-glutamyl phosphate reductase (417 aa).

Belongs to the gamma-glutamyl phosphate reductase family.

It is found in the cytoplasm. The catalysed reaction is L-glutamate 5-semialdehyde + phosphate + NADP(+) = L-glutamyl 5-phosphate + NADPH + H(+). It functions in the pathway amino-acid biosynthesis; L-proline biosynthesis; L-glutamate 5-semialdehyde from L-glutamate: step 2/2. Its function is as follows. Catalyzes the NADPH-dependent reduction of L-glutamate 5-phosphate into L-glutamate 5-semialdehyde and phosphate. The product spontaneously undergoes cyclization to form 1-pyrroline-5-carboxylate. This is Gamma-glutamyl phosphate reductase from Streptococcus agalactiae serotype Ia (strain ATCC 27591 / A909 / CDC SS700).